Reading from the N-terminus, the 155-residue chain is MATVTSESEFQHMLRVCNTNLDGRRKVPYALTGIKGCGRRYAYLVCKRAGIDVNKRAGLMTPAEIEKIVDILNNPLNYKIPVWFLNRQKDNKDGKDSQLIANAVETRLREDIEALKKMRAHRGLRHYWGLRVRGQHTKTTGRRGRTVGVSRTKGA.

Over residues 135–145 the composition is skewed to basic residues; that stretch reads QHTKTTGRRGR. The segment at 135-155 is disordered; the sequence is QHTKTTGRRGRTVGVSRTKGA. A compositionally biased stretch (low complexity) spans 146–155; the sequence is TVGVSRTKGA.

The protein belongs to the universal ribosomal protein uS13 family. As to quaternary structure, component of the small ribosomal subunit.

The protein resides in the cytoplasm. In terms of biological role, component of the small ribosomal subunit. The ribosome is a large ribonucleoprotein complex responsible for the synthesis of proteins in the cell. The protein is Small ribosomal subunit protein uS13 (RPS18) of Entamoeba histolytica (strain ATCC 30459 / HM-1:IMSS / ABRM).